Reading from the N-terminus, the 305-residue chain is tRNA pseudouridine synthase B (305 aa).

D48 (nucleophile) is an active-site residue.

Belongs to the pseudouridine synthase TruB family. Type 1 subfamily.

It carries out the reaction uridine(55) in tRNA = pseudouridine(55) in tRNA. Functionally, responsible for synthesis of pseudouridine from uracil-55 in the psi GC loop of transfer RNAs. In Pseudomonas fluorescens (strain Pf0-1), this protein is tRNA pseudouridine synthase B.